The chain runs to 869 residues: Rho GTPase-activating protein 27 (869 aa).

In terms of domain architecture, SH3 spans 6 to 69 (EGDVYVLVEH…PAQYVRELPA (64 aa)). Residue Ala28 is modified to Phosphotyrosine. The segment at 104-134 (GADGSSAEPRGRASSLCGPARQRTGGQRNSL) is disordered. A phosphoserine mark is found at Ser155, Ser215, and Ser249. 2 disordered regions span residues 208–300 (RCPP…SGES) and 331–401 (ETEE…GWSC). Positions 209 to 220 (CPPRAESPKQVD) are enriched in basic and acidic residues. Residues 235–250 (RATSPRSAAAPPRLSP) are compositionally biased toward low complexity. The WW 1 domain occupies 246-280 (PRLSPVWETHTDTGTGRPYYYNPDTGVTTWESPFE). Positions 283–294 (EGTTSPATSRAS) are enriched in polar residues. The region spanning 299–333 (ESLETEWGQYWDEESRRVFFYNPLTGETAWEDETE) is the WW 2 domain. Positions 345–356 (MQPSLSPRSPGQ) are enriched in polar residues. Ser350 carries the post-translational modification Phosphoserine. In terms of domain architecture, WW 3 spans 414–447 (QFTQEQWVRLEDQHGKPYFYNPEDSSVQWELPQV). Disordered regions lie at residues 449-477 (IPAP…KIKT) and 623-642 (EEDV…GLES). Ser459 and Ser462 each carry phosphoserine. Thr464 carries the post-translational modification Phosphothreonine. At Ser469 the chain carries Phosphoserine. In terms of domain architecture, PH spans 477–593 (TLDKAGVLHR…WHKAIAEGIS (117 aa)). A phosphoserine mark is found at Ser632 and Ser636. A Rho-GAP domain is found at 677 to 866 (CALAQLCERE…LILHQCADIF (190 aa)).

As to quaternary structure, interacts with SH3KBP1/CIN85. In terms of tissue distribution, widely expressed. Highly expressed in kidney, lung, small intestine and thymus.

The protein resides in the cytoplasm. Its subcellular location is the membrane. Functionally, rho GTPase-activating protein which may be involved in clathrin-mediated endocytosis. GTPase activators for the Rho-type GTPases act by converting them to an inactive GDP-bound state. Has activity toward CDC42 and RAC1. The polypeptide is Rho GTPase-activating protein 27 (Arhgap27) (Mus musculus (Mouse)).